The sequence spans 122 residues: Small ribosomal subunit protein uS13 (122 aa).

The tract at residues 94–122 (SLPVRGQRTKTNARTRKVHVSRSKNSRGK) is disordered.

This sequence belongs to the universal ribosomal protein uS13 family. As to quaternary structure, part of the 30S ribosomal subunit. Forms a loose heterodimer with protein S19. Forms two bridges to the 50S subunit in the 70S ribosome.

Located at the top of the head of the 30S subunit, it contacts several helices of the 16S rRNA. In the 70S ribosome it contacts the 23S rRNA (bridge B1a) and protein L5 of the 50S subunit (bridge B1b), connecting the 2 subunits; these bridges are implicated in subunit movement. Contacts the tRNAs in the A and P-sites. The polypeptide is Small ribosomal subunit protein uS13 (Haemophilus influenzae (strain ATCC 51907 / DSM 11121 / KW20 / Rd)).